A 204-amino-acid polypeptide reads, in one-letter code: Protein C (204 aa).

The interval 1-78 (MPSFLRGILK…TEQSQRRPKI (78 aa)) is disordered. Basic and acidic residues predominate over residues 10–20 (KPKERHHENKN). Residues 25–34 (SSDSLTSSYP) are compositionally biased toward low complexity.

Belongs to the respirovirus protein C family.

In Homo sapiens (Human), this protein is Protein C (P/V/C).